We begin with the raw amino-acid sequence, 548 residues long: Chaperonin GroEL 3 (548 aa).

Residues Thr30–Pro33, Lys51, Asp87–Thr91, Gly415, and Asp496 contribute to the ATP site.

This sequence belongs to the chaperonin (HSP60) family. Forms a cylinder of 14 subunits composed of two heptameric rings stacked back-to-back. Interacts with the co-chaperonin GroES.

The protein localises to the cytoplasm. The catalysed reaction is ATP + H2O + a folded polypeptide = ADP + phosphate + an unfolded polypeptide.. In terms of biological role, together with its co-chaperonin GroES, plays an essential role in assisting protein folding. The GroEL-GroES system forms a nano-cage that allows encapsulation of the non-native substrate proteins and provides a physical environment optimized to promote and accelerate protein folding. The chain is Chaperonin GroEL 3 from Nitrobacter winogradskyi (strain ATCC 25391 / DSM 10237 / CIP 104748 / NCIMB 11846 / Nb-255).